The chain runs to 806 residues: Phenylalanine--tRNA ligase beta subunit (806 aa).

In terms of domain architecture, tRNA-binding spans 40-153; sequence FNSPDYLQLA…ADAIIIDHVS (114 aa). The 75-residue stretch at 413-487 folds into the B5 domain; that stretch reads PFSKKLTVNF…KLIDINKLKP (75 aa). 4 residues coordinate Mg(2+): aspartate 465, aspartate 471, glutamate 474, and glutamate 475.

It belongs to the phenylalanyl-tRNA synthetase beta subunit family. Type 1 subfamily. Tetramer of two alpha and two beta subunits. Mg(2+) serves as cofactor.

It localises to the cytoplasm. The catalysed reaction is tRNA(Phe) + L-phenylalanine + ATP = L-phenylalanyl-tRNA(Phe) + AMP + diphosphate + H(+). The sequence is that of Phenylalanine--tRNA ligase beta subunit (pheT) from Mycoplasma genitalium (strain ATCC 33530 / DSM 19775 / NCTC 10195 / G37) (Mycoplasmoides genitalium).